We begin with the raw amino-acid sequence, 544 residues long: Probable protein kinase UbiB (544 aa).

Residues 123–501 (EFDIKPLASA…KRQQATGKFL (379 aa)) enclose the Protein kinase domain. ATP is bound by residues 129–137 (LASASIAQV) and lysine 152. Aspartate 287 serves as the catalytic Proton acceptor. Transmembrane regions (helical) follow at residues 496-516 (ATGKFLFGVGATLVVCSAILV) and 519-539 (AYEQLSMASGIAGVTFWLLSW).

This sequence belongs to the ABC1 family. UbiB subfamily.

The protein resides in the cell inner membrane. The protein operates within cofactor biosynthesis; ubiquinone biosynthesis [regulation]. Functionally, is probably a protein kinase regulator of UbiI activity which is involved in aerobic coenzyme Q (ubiquinone) biosynthesis. The sequence is that of Probable protein kinase UbiB from Vibrio parahaemolyticus serotype O3:K6 (strain RIMD 2210633).